Here is a 137-residue protein sequence, read N- to C-terminus: Thionin-like protein 1 (137 aa).

The first 23 residues, 1-23, serve as a signal peptide directing secretion; it reads MEDKRVAMLVVMMLVMGNMLIEA.

The protein belongs to the plant thionin (TC 1.C.44) family. In terms of processing, is disulfide-linked.

The protein localises to the secreted. In terms of biological role, may be involved in plant defense. This Arabidopsis thaliana (Mouse-ear cress) protein is Thionin-like protein 1.